A 148-amino-acid chain; its full sequence is Lysozyme C (148 aa).

The signal sequence occupies residues 1–18 (MKVLIILGLVLLSVMVQG). Positions 19-148 (KVFERCELAR…VSQYVQGCGV (130 aa)) constitute a C-type lysozyme domain. Disulfide bonds link cysteine 24–cysteine 146, cysteine 48–cysteine 134, cysteine 83–cysteine 99, and cysteine 95–cysteine 113. Active-site residues include glutamate 53 and aspartate 71.

This sequence belongs to the glycosyl hydrolase 22 family. In terms of assembly, monomer.

It catalyses the reaction Hydrolysis of (1-&gt;4)-beta-linkages between N-acetylmuramic acid and N-acetyl-D-glucosamine residues in a peptidoglycan and between N-acetyl-D-glucosamine residues in chitodextrins.. Lysozymes have primarily a bacteriolytic function; those in tissues and body fluids are associated with the monocyte-macrophage system and enhance the activity of immunoagents. The chain is Lysozyme C (LYZ) from Callithrix jacchus (White-tufted-ear marmoset).